The following is a 209-amino-acid chain: Small ribosomal subunit protein uS4 (209 aa).

A disordered region spans residues 23–46; it reads SRNPLLKKPHPPGQHGMQRKKKSD. The S4 RNA-binding domain occupies 93–153; that stretch reads CRLDNMVYRM…EKSKRLQSVK (61 aa).

Belongs to the universal ribosomal protein uS4 family. As to quaternary structure, part of the 30S ribosomal subunit. Contacts protein S5. The interaction surface between S4 and S5 is involved in control of translational fidelity.

In terms of biological role, one of the primary rRNA binding proteins, it binds directly to 16S rRNA where it nucleates assembly of the body of the 30S subunit. With S5 and S12 plays an important role in translational accuracy. The sequence is that of Small ribosomal subunit protein uS4 from Chlamydia pneumoniae (Chlamydophila pneumoniae).